A 215-amino-acid polypeptide reads, in one-letter code: Protein transport protein sec22 (215 aa).

Over 1 to 194 (MVKSTTVTRL…RVNLEALWRQ (194 aa)) the chain is Cytoplasmic. Residues 9 to 118 (RLDGLPLAAS…YAFVQFDTFM (110 aa)) enclose the Longin domain. A v-SNARE coiled-coil homology domain is found at 133-193 (NLDKLNTELK…RRVNLEALWR (61 aa)). A helical; Anchor for type IV membrane protein transmembrane segment spans residues 195-215 (YGPVSIIALLFLIFVYWRFFA).

It belongs to the synaptobrevin family. As to quaternary structure, component of two distinct SNARE complexes consisting of sed5, bos1, bet1 and sec22 or ufe1, use1, sec20 and sec22. Ykt6 can probably replace sec22 as subunit of either complex.

It is found in the membrane. It localises to the endoplasmic reticulum membrane. Its subcellular location is the golgi apparatus membrane. Functionally, nonessential SNARE involved in targeting and fusion of ER-derived transport vesicles with the Golgi complex as well as Golgi-derived retrograde transport vesicles with the ER. This Schizosaccharomyces pombe (strain 972 / ATCC 24843) (Fission yeast) protein is Protein transport protein sec22 (sec22).